The following is a 428-amino-acid chain: GTPase Obg (428 aa).

One can recognise an Obg domain in the interval 1-158 (MFIDQVKIYV…RDVILELKVL (158 aa)). In terms of domain architecture, OBG-type G spans 159 to 329 (ADVGLVGFPS…LLFEVANLIE (171 aa)). GTP-binding positions include 165 to 172 (GFPSVGKS), 190 to 194 (FTTIV), 212 to 215 (DLPG), 282 to 285 (NKMD), and 310 to 312 (SAV). Mg(2+)-binding residues include S172 and T192. An OCT domain is found at 350 to 428 (KFETEGVKFD…ILEYEFEFID (79 aa)).

This sequence belongs to the TRAFAC class OBG-HflX-like GTPase superfamily. OBG GTPase family. In terms of assembly, monomer. Mg(2+) is required as a cofactor.

It is found in the cytoplasm. In terms of biological role, an essential GTPase which binds GTP, GDP and possibly (p)ppGpp with moderate affinity, with high nucleotide exchange rates and a fairly low GTP hydrolysis rate. Plays a role in control of the cell cycle, stress response, ribosome biogenesis and in those bacteria that undergo differentiation, in morphogenesis control. This Bacillus anthracis protein is GTPase Obg.